Here is a 441-residue protein sequence, read N- to C-terminus: Peroxisomal biogenesis factor 3 (441 aa).

At 1-17 the chain is on the peroxisomal side; the sequence is MAPNQRSRSLLQRHRGK. A helical membrane pass occupies residues 18 to 39; sequence VLISLTGIAALFTTGSVVVFFV. Over 40-441 the chain is Cytoplasmic; that stretch reads KRWLYKQQLR…GVSSSFSFKP (402 aa).

Belongs to the peroxin-3 family. As to quaternary structure, interacts with MSP1; leading to inhibit the translocase activity of MSP1.

The protein localises to the peroxisome membrane. Its function is as follows. Involved in peroxisome biosynthesis. Acts as a regulator of MSP1 by inhibiting the ability of MSP1 to unfold target proteins. In Saccharomyces cerevisiae (strain ATCC 204508 / S288c) (Baker's yeast), this protein is Peroxisomal biogenesis factor 3 (PEX3).